We begin with the raw amino-acid sequence, 172 residues long: R-phycocyanin-2 beta chain (172 aa).

N72 carries the N4-methylasparagine modification. C82 serves as a coordination point for (2R,3E)-phycocyanobilin. Residue C153 coordinates (2R,3E)-phycoerythrobilin.

Belongs to the phycobiliprotein family. Heterodimer of an alpha and a beta chain. Contains two covalently linked bilin chromophores.

It is found in the cellular thylakoid membrane. Light-harvesting photosynthetic bile pigment-protein from the phycobiliprotein complex. In Synechococcus sp. (strain WH8020), this protein is R-phycocyanin-2 beta chain (rpcB).